Consider the following 808-residue polypeptide: Probable E3 ubiquitin-protein ligase hulA (808 aa).

The region spanning 1–112 (MGSNLPAQPN…QMGGDEMLTR (112 aa)) is the C2 domain. Disordered stretches follow at residues 134–231 (NLST…GWER) and 275–346 (RRAH…YFVD). Composition is skewed to polar residues over residues 142 to 159 (QANGLHRSNLQSSTSSGL) and 171 to 198 (GPSQLDPTASNPSLNPQRVPSTTRPSST). Positions 199–210 (VAPVNGAAAPGA) are enriched in low complexity. The segment covering 211–220 (SRTNLSSFED) has biased composition (polar residues). Positions 223–256 (GRLPAGWERREDNLGRTYYVDHNTRTTTWTRPSS) constitute a WW 1 domain. Residues 275–288 (RRAHQSRMLPEDRT) are compositionally biased toward basic and acidic residues. Residues 289 to 303 (GASSPNLQENQQAQT) are compositionally biased toward polar residues. A compositionally biased stretch (low complexity) spans 317–326 (ATGATTAGTG). 2 WW domains span residues 326 to 359 (GELPPGWEQRTTPEGRPYFVDHNTRTTTWVDPRR) and 386 to 419 (GPLPSGWEMRLTNTARVYFVDHNTKTTTWDDPRL). The HECT domain maps to 475-808 (SASDLKKRLM…VEETLGFGQE (334 aa)). The active-site Glycyl thioester intermediate is the C776.

This sequence belongs to the RSP5/NEDD4 family. Interacts with creD.

Its subcellular location is the cytoplasm. It carries out the reaction S-ubiquitinyl-[E2 ubiquitin-conjugating enzyme]-L-cysteine + [acceptor protein]-L-lysine = [E2 ubiquitin-conjugating enzyme]-L-cysteine + N(6)-ubiquitinyl-[acceptor protein]-L-lysine.. The protein operates within protein modification; protein ubiquitination. Its function is as follows. E3 ubiquitin-protein ligase which accepts ubiquitin from an E2 ubiquitin-conjugating enzyme in the form of a thioester and then directly transfers the ubiquitin to targeted substrates. Probably involved in the regulatory network controlling carbon source utilization. The chain is Probable E3 ubiquitin-protein ligase hulA (hulA) from Aspergillus terreus (strain NIH 2624 / FGSC A1156).